We begin with the raw amino-acid sequence, 307 residues long: Ribosomal RNA small subunit methyltransferase A (307 aa).

The S-adenosyl-L-methionine site is built by Asn35, Val37, Gly62, Glu83, Asp113, and Asn136.

It belongs to the class I-like SAM-binding methyltransferase superfamily. rRNA adenine N(6)-methyltransferase family. RsmA subfamily.

It is found in the cytoplasm. The enzyme catalyses adenosine(1518)/adenosine(1519) in 16S rRNA + 4 S-adenosyl-L-methionine = N(6)-dimethyladenosine(1518)/N(6)-dimethyladenosine(1519) in 16S rRNA + 4 S-adenosyl-L-homocysteine + 4 H(+). Functionally, specifically dimethylates two adjacent adenosines (A1518 and A1519) in the loop of a conserved hairpin near the 3'-end of 16S rRNA in the 30S particle. May play a critical role in biogenesis of 30S subunits. This chain is Ribosomal RNA small subunit methyltransferase A, found in Bifidobacterium longum subsp. infantis (strain ATCC 15697 / DSM 20088 / JCM 1222 / NCTC 11817 / S12).